A 224-amino-acid polypeptide reads, in one-letter code: Cytidylate kinase (224 aa).

11–19 (GPAGAGKST) contacts ATP.

It belongs to the cytidylate kinase family. Type 1 subfamily.

The protein localises to the cytoplasm. The enzyme catalyses CMP + ATP = CDP + ADP. It catalyses the reaction dCMP + ATP = dCDP + ADP. The protein is Cytidylate kinase of Exiguobacterium sp. (strain ATCC BAA-1283 / AT1b).